The primary structure comprises 246 residues: Small ribosomal subunit protein uS2 (246 aa).

Belongs to the universal ribosomal protein uS2 family.

In Pseudomonas aeruginosa (strain LESB58), this protein is Small ribosomal subunit protein uS2.